An 82-amino-acid chain; its full sequence is Small ribosomal subunit protein uS12 (82 aa).

3-methylthioaspartic acid is present on Asp-59.

It belongs to the universal ribosomal protein uS12 family. Part of the 30S ribosomal subunit. Contacts proteins S8 and S17. May interact with IF1 in the 30S initiation complex.

In terms of biological role, with S4 and S5 plays an important role in translational accuracy. Its function is as follows. Interacts with and stabilizes bases of the 16S rRNA that are involved in tRNA selection in the A site and with the mRNA backbone. Located at the interface of the 30S and 50S subunits, it traverses the body of the 30S subunit contacting proteins on the other side and probably holding the rRNA structure together. The combined cluster of proteins S8, S12 and S17 appears to hold together the shoulder and platform of the 30S subunit. This is Small ribosomal subunit protein uS12 (rpsL) from Actinobacillus pleuropneumoniae (Haemophilus pleuropneumoniae).